The chain runs to 183 residues: ATP synthase subunit delta (183 aa).

This sequence belongs to the ATPase delta chain family. F-type ATPases have 2 components, F(1) - the catalytic core - and F(0) - the membrane proton channel. F(1) has five subunits: alpha(3), beta(3), gamma(1), delta(1), epsilon(1). F(0) has three main subunits: a(1), b(2) and c(10-14). The alpha and beta chains form an alternating ring which encloses part of the gamma chain. F(1) is attached to F(0) by a central stalk formed by the gamma and epsilon chains, while a peripheral stalk is formed by the delta and b chains.

Its subcellular location is the cell inner membrane. Its function is as follows. F(1)F(0) ATP synthase produces ATP from ADP in the presence of a proton or sodium gradient. F-type ATPases consist of two structural domains, F(1) containing the extramembraneous catalytic core and F(0) containing the membrane proton channel, linked together by a central stalk and a peripheral stalk. During catalysis, ATP synthesis in the catalytic domain of F(1) is coupled via a rotary mechanism of the central stalk subunits to proton translocation. This protein is part of the stalk that links CF(0) to CF(1). It either transmits conformational changes from CF(0) to CF(1) or is implicated in proton conduction. In Verminephrobacter eiseniae (strain EF01-2), this protein is ATP synthase subunit delta.